A 305-amino-acid polypeptide reads, in one-letter code: Heme A synthase (305 aa).

Topologically, residues 1-6 (MKKFLK) are cytoplasmic. Residues 7-27 (VWSVLTIICMTVVVFGGALVT) form a helical membrane-spanning segment. Residues 28 to 63 (KTGSADGCGNSWPLCNGQLVRLTDVTPEKLIEFMHR) lie on the Extracellular side of the membrane. An intrachain disulfide couples cysteine 35 to cysteine 42. The active site involves glutamate 59. A heme o-binding site is contributed by histidine 62. A helical membrane pass occupies residues 64–84 (MTTGISSIFVIVLAICAWIYM). Residues 85-92 (KNRRETKP) are Cytoplasmic-facing. A helical membrane pass occupies residues 93-113 (LAIIAVLFLIIQALMGMAAVV). The Extracellular portion of the chain corresponds to 114–122 (WGQNPYIMA). The helical transmembrane segment at 123–143 (LHFGISIICYASIVLLALMIF) threads the bilayer. Histidine 124 is a heme o binding site. Residues 144–160 (EVDRKFDARNLVMGTKL) lie on the Cytoplasmic side of the membrane. The chain crosses the membrane as a helical span at residues 161 to 181 (RINIYALTIYTYLAVYTGALV). Topologically, residues 182-212 (RHEKASMAVPVWPFENGKFIMPDSVQDYVQY) are extracellular. A helical transmembrane segment spans residues 213–233 (FHRVAAFILIVWLLYVTWLVF). Histidine 214 contributes to the heme b binding site. The Cytoplasmic portion of the chain corresponds to 234-240 (RDYRRYR). Residues 241 to 261 (VLTFSMVLSLLFIALQAVTGA) form a helical membrane-spanning segment. The Extracellular segment spans residues 262-271 (LSVYTGVNLY). A helical transmembrane segment spans residues 272–292 (IALAHSLIITMLFALLCYLCL). Histidine 276 contributes to the heme b binding site. At 293–305 (LASRSKSNRLRIK) the chain is on the cytoplasmic side.

This sequence belongs to the COX15/CtaA family. Type 1 subfamily. As to quaternary structure, interacts with CtaB. Requires heme b as cofactor.

Its subcellular location is the cell membrane. It carries out the reaction Fe(II)-heme o + 2 A + H2O = Fe(II)-heme a + 2 AH2. It participates in porphyrin-containing compound metabolism; heme A biosynthesis; heme A from heme O: step 1/1. Catalyzes the conversion of heme O to heme A by two successive hydroxylations of the methyl group at C8. The first hydroxylation forms heme I, the second hydroxylation results in an unstable dihydroxymethyl group, which spontaneously dehydrates, resulting in the formyl group of heme A. The chain is Heme A synthase from Listeria welshimeri serovar 6b (strain ATCC 35897 / DSM 20650 / CCUG 15529 / CIP 8149 / NCTC 11857 / SLCC 5334 / V8).